An 878-amino-acid polypeptide reads, in one-letter code: Protein translocase subunit SecA (878 aa).

ATP is bound by residues glutamine 81, 99–103, and aspartate 489; that span reads GEGKT.

The protein belongs to the SecA family.

The protein resides in the plastid. The protein localises to the chloroplast stroma. It is found in the chloroplast thylakoid membrane. It catalyses the reaction ATP + H2O + cellular proteinSide 1 = ADP + phosphate + cellular proteinSide 2.. Functionally, has a central role in coupling the hydrolysis of ATP to the transfer of proteins across the thylakoid membrane. This Thalassiosira pseudonana (Marine diatom) protein is Protein translocase subunit SecA.